We begin with the raw amino-acid sequence, 407 residues long: DNA-directed RNA polymerase subunit Rpo1C (407 aa).

This sequence belongs to the RNA polymerase beta' chain family. As to quaternary structure, part of the RNA polymerase complex.

It is found in the cytoplasm. It carries out the reaction RNA(n) + a ribonucleoside 5'-triphosphate = RNA(n+1) + diphosphate. In terms of biological role, DNA-dependent RNA polymerase (RNAP) catalyzes the transcription of DNA into RNA using the four ribonucleoside triphosphates as substrates. Forms part of the jaw domain. In Aeropyrum pernix (strain ATCC 700893 / DSM 11879 / JCM 9820 / NBRC 100138 / K1), this protein is DNA-directed RNA polymerase subunit Rpo1C.